The chain runs to 192 residues: Lipid A acyltransferase PagP (192 aa).

The N-terminal stretch at 1–26 (MTVVNKSFLTILIFFCQILFPLNASA) is a signal peptide. Active-site residues include His64, Asp107, and Ser108.

The protein belongs to the lipid A palmitoyltransferase family. As to quaternary structure, homodimer.

It is found in the cell outer membrane. It carries out the reaction a lipid A + a 1,2-diacyl-sn-glycero-3-phosphocholine = a hepta-acyl lipid A + a 2-acyl-sn-glycero-3-phosphocholine. The catalysed reaction is a lipid IVA + a 1,2-diacyl-sn-glycero-3-phosphocholine = a lipid IVB + a 2-acyl-sn-glycero-3-phosphocholine. The enzyme catalyses a lipid IIA + a 1,2-diacyl-sn-glycero-3-phosphocholine = a lipid IIB + a 2-acyl-sn-glycero-3-phosphocholine. Transfers a fatty acid residue from the sn-1 position of a phospholipid to the N-linked hydroxyfatty acid chain on the proximal unit of lipid A or its precursors. The sequence is that of Lipid A acyltransferase PagP from Cronobacter sakazakii (strain ATCC BAA-894) (Enterobacter sakazakii).